An 86-amino-acid chain; its full sequence is Toxin Aam3 (86 aa).

An N-terminal signal peptide occupies residues 1–19 (MNYLVMISLALLFMIGVES). The region spanning 21 to 85 (RDGYIAQPNN…PIKIIGQKCT (65 aa)) is the LCN-type CS-alpha/beta domain. Intrachain disulfides connect Cys31–Cys84, Cys35–Cys56, Cys42–Cys66, and Cys46–Cys68.

Belongs to the long (4 C-C) scorpion toxin superfamily. Sodium channel inhibitor family. Alpha subfamily. In terms of processing, the C-terminal basic residue is removed by a carboxypeptidase. In terms of tissue distribution, expressed by the venom gland.

Its subcellular location is the secreted. Alpha toxins bind voltage-independently at site-3 of sodium channels (Nav) and inhibit the inactivation of the activated channels, thereby blocking neuronal transmission. The polypeptide is Toxin Aam3 (Androctonus amoreuxi (African fattail scorpion)).